Consider the following 233-residue polypeptide: Glucosamine-6-phosphate deaminase (233 aa).

D62 (proton acceptor; for enolization step) is an active-site residue. N128 serves as the catalytic For ring-opening step. Residue H130 is the Proton acceptor; for ring-opening step of the active site. E135 (for ring-opening step) is an active-site residue.

This sequence belongs to the glucosamine/galactosamine-6-phosphate isomerase family. NagB subfamily.

It carries out the reaction alpha-D-glucosamine 6-phosphate + H2O = beta-D-fructose 6-phosphate + NH4(+). The protein operates within amino-sugar metabolism; N-acetylneuraminate degradation; D-fructose 6-phosphate from N-acetylneuraminate: step 5/5. Functionally, catalyzes the reversible isomerization-deamination of glucosamine 6-phosphate (GlcN6P) to form fructose 6-phosphate (Fru6P) and ammonium ion. This chain is Glucosamine-6-phosphate deaminase, found in Leuconostoc citreum (strain KM20).